Reading from the N-terminus, the 546-residue chain is Chaperonin GroEL (546 aa).

ATP-binding positions include 30–33 (TLGP), K51, 87–91 (DGTTT), G415, and D495.

Belongs to the chaperonin (HSP60) family. In terms of assembly, forms a cylinder of 14 subunits composed of two heptameric rings stacked back-to-back. Interacts with the co-chaperonin GroES.

It localises to the cytoplasm. It carries out the reaction ATP + H2O + a folded polypeptide = ADP + phosphate + an unfolded polypeptide.. Together with its co-chaperonin GroES, plays an essential role in assisting protein folding. The GroEL-GroES system forms a nano-cage that allows encapsulation of the non-native substrate proteins and provides a physical environment optimized to promote and accelerate protein folding. This Brucella melitensis biotype 1 (strain ATCC 23456 / CCUG 17765 / NCTC 10094 / 16M) protein is Chaperonin GroEL.